The primary structure comprises 315 residues: tRNA dimethylallyltransferase (315 aa).

10 to 17 (GPTEVGKT) contacts ATP. 12 to 17 (TEVGKT) contacts substrate. The tract at residues 35–38 (DSMQ) is interaction with substrate tRNA.

It belongs to the IPP transferase family. As to quaternary structure, monomer. It depends on Mg(2+) as a cofactor.

The catalysed reaction is adenosine(37) in tRNA + dimethylallyl diphosphate = N(6)-dimethylallyladenosine(37) in tRNA + diphosphate. Functionally, catalyzes the transfer of a dimethylallyl group onto the adenine at position 37 in tRNAs that read codons beginning with uridine, leading to the formation of N6-(dimethylallyl)adenosine (i(6)A). In Geobacillus thermodenitrificans (strain NG80-2), this protein is tRNA dimethylallyltransferase.